A 244-amino-acid polypeptide reads, in one-letter code: Tegument protein UL51 (244 aa).

Residue Cys-9 is the site of S-palmitoyl cysteine; by host attachment. The interval 175–244 (TAGLGATEAP…SSTEAPLLLA (70 aa)) is disordered. Over residues 210–220 (RPGPVPPADPT) the composition is skewed to pro residues.

The protein belongs to the herpesviridae UL51 family. In terms of assembly, oligomerizes. Interacts with UL7; this interaction mediates UL7 incorporation to virions. Phosphorylated. Post-translationally, palmitoylation is necessary for Golgi localization.

Its subcellular location is the virion tegument. It localises to the host cytoplasm. It is found in the host Golgi apparatus. Its function is as follows. Plays several roles during the time course of infection, including egress of virus particles from the perinuclear space and secondary envelopment of cytoplasmic capsids that bud into specific trans-Golgi network (TGN)-derived membranes. The polypeptide is Tegument protein UL51 (Human herpesvirus 2 (strain HG52) (HHV-2)).